Here is a 177-residue protein sequence, read N- to C-terminus: Inorganic pyrophosphatase (177 aa).

K31, R45, and Y57 together coordinate substrate. Mg(2+) contacts are provided by D67, D72, and D104. Residue Y142 coordinates substrate.

This sequence belongs to the PPase family. Homohexamer. Mg(2+) is required as a cofactor.

The protein resides in the cytoplasm. It catalyses the reaction diphosphate + H2O = 2 phosphate + H(+). Catalyzes the hydrolysis of inorganic pyrophosphate (PPi) forming two phosphate ions. The protein is Inorganic pyrophosphatase of Neisseria meningitidis serogroup A / serotype 4A (strain DSM 15465 / Z2491).